We begin with the raw amino-acid sequence, 254 residues long: Isoprenyl transferase (254 aa).

The active site involves aspartate 23. Aspartate 23 contacts Mg(2+). Residues 24–27, tryptophan 28, arginine 36, histidine 40, and 68–70 contribute to the substrate site; these read GNGR and STE. The Proton acceptor role is filled by asparagine 71. Residues tryptophan 72, arginine 74, arginine 191, and 197-199 each bind substrate; that span reads RIS. Position 210 (glutamate 210) interacts with Mg(2+).

Belongs to the UPP synthase family. As to quaternary structure, homodimer. Mg(2+) serves as cofactor.

Catalyzes the condensation of isopentenyl diphosphate (IPP) with allylic pyrophosphates generating different type of terpenoids. The polypeptide is Isoprenyl transferase (Porphyromonas gingivalis (strain ATCC BAA-308 / W83)).